The sequence spans 393 residues: S-adenosylmethionine synthase 3 (393 aa).

Glu-9 is a Mg(2+) binding site. Position 15 (His-15) interacts with ATP. Glu-43 serves as a coordination point for K(+). The L-methionine site is built by Glu-56 and Gln-99. ATP contacts are provided by residues 167 to 169, 235 to 238, Asp-246, 252 to 253, Ala-269, Lys-273, and Lys-277; these read DGK, SGRF, and RK. Asp-246 contacts L-methionine. L-methionine is bound at residue Lys-277.

This sequence belongs to the AdoMet synthase family. Homotetramer. The cofactor is Mn(2+). Mg(2+) serves as cofactor. Co(2+) is required as a cofactor. It depends on K(+) as a cofactor.

The protein localises to the cytoplasm. It carries out the reaction L-methionine + ATP + H2O = S-adenosyl-L-methionine + phosphate + diphosphate. It participates in amino-acid biosynthesis; S-adenosyl-L-methionine biosynthesis; S-adenosyl-L-methionine from L-methionine: step 1/1. Catalyzes the formation of S-adenosylmethionine from methionine and ATP. The reaction comprises two steps that are both catalyzed by the same enzyme: formation of S-adenosylmethionine (AdoMet) and triphosphate, and subsequent hydrolysis of the triphosphate. The sequence is that of S-adenosylmethionine synthase 3 (SAM3) from Petunia hybrida (Petunia).